A 229-amino-acid polypeptide reads, in one-letter code: UPF0758 protein MM_2791 (229 aa).

Positions 106 to 228 (KISSPKDVYT…YVSLKDEGFV (123 aa)) constitute an MPN domain. Residues H177, H179, and D190 each coordinate Zn(2+). Residues 177 to 190 (HNHPSGDPSPSRED) carry the JAMM motif motif.

It belongs to the UPF0758 family.

The protein is UPF0758 protein MM_2791 of Methanosarcina mazei (strain ATCC BAA-159 / DSM 3647 / Goe1 / Go1 / JCM 11833 / OCM 88) (Methanosarcina frisia).